The following is a 182-amino-acid chain: Transcription termination/antitermination protein NusG (182 aa).

In terms of domain architecture, KOW spans 130-161 (VGEVVRVNEGPFADFNGTVEEVDYEKSRLKVS).

This sequence belongs to the NusG family.

Participates in transcription elongation, termination and antitermination. The chain is Transcription termination/antitermination protein NusG from Vibrio vulnificus (strain CMCP6).